The sequence spans 324 residues: Quinolinate synthase (324 aa).

Residues His-39 and Ser-56 each contribute to the iminosuccinate site. Cys-101 provides a ligand contact to [4Fe-4S] cluster. Iminosuccinate-binding positions include 127-129 and Ser-144; that span reads YIN. Position 187 (Cys-187) interacts with [4Fe-4S] cluster. Iminosuccinate is bound by residues 213–215 and Thr-230; that span reads HPE. Residue Cys-280 coordinates [4Fe-4S] cluster.

Belongs to the quinolinate synthase family. Type 2 subfamily. The cofactor is [4Fe-4S] cluster.

The protein localises to the cytoplasm. The catalysed reaction is iminosuccinate + dihydroxyacetone phosphate = quinolinate + phosphate + 2 H2O + H(+). It participates in cofactor biosynthesis; NAD(+) biosynthesis; quinolinate from iminoaspartate: step 1/1. In terms of biological role, catalyzes the condensation of iminoaspartate with dihydroxyacetone phosphate to form quinolinate. The sequence is that of Quinolinate synthase from Nostoc sp. (strain PCC 7120 / SAG 25.82 / UTEX 2576).